A 228-amino-acid chain; its full sequence is MRKGEVLKLGIVPYMEGKEIQLKAFERVKKGETDGILILLQHPPVYTIGVSGGFDENILVPLAELKKKAELYKVERGGKITFHGPGQIVAYPIFNLAKWQKDVHLFVYKLEETIIKLLEEYGIKAGRKPKYTGVWVGDEKICAIGIAVRRWITWHGIAFNVNTDLSYFGLINACGITEFGVTSMQKLGINEDIEKVKEKMVDKFSEVFGIHFSEITLDRLAVIDNAKA.

The region spanning 31 to 212 (GETDGILILL…KFSEVFGIHF (182 aa)) is the BPL/LPL catalytic domain. Substrate-binding positions include 76 to 83 (RGGKITFH), 143 to 145 (AIG), and 156 to 158 (GIA). Cysteine 174 functions as the Acyl-thioester intermediate in the catalytic mechanism.

The protein belongs to the LipB family.

It is found in the cytoplasm. The catalysed reaction is octanoyl-[ACP] + L-lysyl-[protein] = N(6)-octanoyl-L-lysyl-[protein] + holo-[ACP] + H(+). Its pathway is protein modification; protein lipoylation via endogenous pathway; protein N(6)-(lipoyl)lysine from octanoyl-[acyl-carrier-protein]: step 1/2. Catalyzes the transfer of endogenously produced octanoic acid from octanoyl-acyl-carrier-protein onto the lipoyl domains of lipoate-dependent enzymes. Lipoyl-ACP can also act as a substrate although octanoyl-ACP is likely to be the physiological substrate. In Thermoanaerobacter sp. (strain X514), this protein is Octanoyltransferase.